A 766-amino-acid chain; its full sequence is Leucine-rich repeat and fibronectin type III domain-containing protein 1 (766 aa).

The N-terminal stretch at 1–31 is a signal peptide; the sequence is MAPGPFSSGLLSPPPAALPFLLLLWAGASRG. One can recognise an LRRNT domain in the interval 32 to 65; it reads QPCPGRCICQNVAPTLTMLCAKTGLLFVPPAIDR. The Extracellular portion of the chain corresponds to 32 to 536; it reads QPCPGRCICQ…LRAHFLGGTM (505 aa). LRR repeat units follow at residues 66–87, 90–111, 114–135, 138–159, 163–184, 187–208, and 211–232; these read RVVE…DFAN, SLVH…AFAD, ALRA…QLRG, NLRH…AFDA, TVED…AVGQ, NLNT…TFVQ, and KLVR…GLFL. N-linked (GlcNAc...) asparagine glycosylation occurs at Asn87. Residues 252 to 298 enclose the LRRCT domain; sequence NPLHCNCELLWLRRLTREDDLETCATPEHLTDRYFWSIPEEEFLCEP. One can recognise an Ig-like domain in the interval 299–386; sequence PLITRQAGGR…GEATAPVEVC (88 aa). Cys321 and Cys370 are joined by a disulfide. Asn343 carries an N-linked (GlcNAc...) asparagine glycan. Residues 397 to 422 form a disordered region; the sequence is PAAPPPLTEPGSSDIATPGRPGANDS. The region spanning 424–520 is the Fibronectin type-III domain; it reads TERRLVAAEL…GCVQFTTAGD (97 aa). A helical transmembrane segment spans residues 537–557; that stretch reads IIAIGGVIVASVLVFIVLLMI. Over 558 to 766 the chain is Cytoplasmic; that stretch reads RYKVYGDGDS…STEWMLESTV (209 aa). Disordered stretches follow at residues 568–601 and 646–742; these read RRIK…PPAP and CLLP…GEDG. Position 713 is a phosphoserine (Ser713). Positions 714–727 are enriched in basic residues; the sequence is YPRRARRTKRHRST.

The protein belongs to the LRFN family. Forms heteromeric complexes with LRFN2, LRFN4 and LRFN5; binding to LRFN2 and LRFN5 may be weaker than that to LRFN4. Also interacts with LRFN3. Forms homomeric complexes, but not across cell junctions. Interacts with DLG1, DLG2 and DLG4, but not with MAGI2, not CASK. Interacts with DLG3. Interacts with 2 AMPA receptor subunits GRIA1 and GRIA2 and NMDA receptor subunit GRIN1. Glycosylated. In terms of tissue distribution, mainly expressed in brain (at protein level) and testis. In brain, found in cerebral cortex (including pyramidal neurons), hippocampus (including CA3 and CA1 neurons), dentate gyrus, cerebellum (including Purkinje neurons) (at protein level) (at protein level). Also expressed in the olfactory bulb.

It is found in the membrane. The protein resides in the synapse. The protein localises to the postsynaptic density membrane. In terms of biological role, promotes neurite outgrowth in hippocampal neurons. Involved in the regulation of the differentiation and maintenance of excitatory synapses. Induces the clustering of excitatory postsynaptic proteins, including DLG4, DLGAP1, GRIA1 and GRIN1. This is Leucine-rich repeat and fibronectin type III domain-containing protein 1 (Lrfn1) from Rattus norvegicus (Rat).